Reading from the N-terminus, the 471-residue chain is Adenosylhomocysteinase (471 aa).

Substrate-binding residues include Thr60, Asp135, and Glu196. 197–199 (TTT) provides a ligand contact to NAD(+). Substrate-binding residues include Lys226 and Asp230. NAD(+) contacts are provided by residues Asn231, 260-265 (GYGDVG), Glu283, Asn318, 339-341 (IGH), and Asn387.

The protein belongs to the adenosylhomocysteinase family. It depends on NAD(+) as a cofactor.

Its subcellular location is the cytoplasm. The catalysed reaction is S-adenosyl-L-homocysteine + H2O = L-homocysteine + adenosine. It participates in amino-acid biosynthesis; L-homocysteine biosynthesis; L-homocysteine from S-adenosyl-L-homocysteine: step 1/1. Functionally, may play a key role in the regulation of the intracellular concentration of adenosylhomocysteine. In Chlorobium luteolum (strain DSM 273 / BCRC 81028 / 2530) (Pelodictyon luteolum), this protein is Adenosylhomocysteinase.